The sequence spans 71 residues: Metallothionein-like protein 1 (71 aa).

Belongs to the metallothionein superfamily. Type 15 family.

Functionally, metallothioneins have a high content of cysteine residues that bind various heavy metals. This chain is Metallothionein-like protein 1 (MT1), found in Casuarina glauca (Swamp oak).